The following is a 639-amino-acid chain: Protein sly1 homolog (639 aa).

A run of 4 repeats spans residues 85–121 (DENL…NLAA), 203–245 (RNSA…FSFQ), 423–460 (LDLL…ERLK), and 464–500 (QAAG…GGGT). The 4 X approximate repeats stretch occupies residues 85-500 (DENLDRIQQD…QATQYEGGGT (416 aa)).

Belongs to the STXBP/unc-18/SEC1 family. As to expression, in embryos, from stage 14, expression is seen in posterior midgut, esophagus and salivary glands. No expression is seen in larval imaginal disks.

The protein localises to the cytoplasm. It is found in the membrane. Functionally, non-vital for development. This is Protein sly1 homolog (Slh) from Drosophila melanogaster (Fruit fly).